Here is a 538-residue protein sequence, read N- to C-terminus: Growth factor receptor-bound protein 14 (538 aa).

Residues methionine 1 to threonine 73 are disordered. Threonine 2 bears the N-acetylthreonine mark. Residues alanine 54–glutamate 69 show a composition bias toward basic and acidic residues. A Ras-associating domain is found at lysine 104–alanine 190. The PH domain occupies tyrosine 232–tyrosine 340. Phosphoserine occurs at positions 370 and 373. In terms of domain architecture, SH2 spans tryptophan 437–cysteine 533.

It belongs to the GRB7/10/14 family. In terms of assembly, interacts with the cytoplasmic domain of the autophosphorylated insulin receptor, through the SH2 domain. Interacts with GRB14 (via BPS domain); this interaction protects the tyrosines in the activation loop on INSR from dephosphorylation. Binds to the ankyrin repeat region of TNKS2 via its N-terminus. Interacts with activated NRAS. Interacts (via SH2 domain) with TEK/TIE2 (tyrosine phosphorylated). Phosphorylated on serine residues. Phosphorylated on tyrosine residues by TEK/TIE2.

The protein localises to the cytoplasm. It is found in the endosome membrane. Adapter protein which modulates coupling of cell surface receptor kinases with specific signaling pathways. Binds to, and suppresses signals from, the activated insulin receptor (INSR). Potent inhibitor of insulin-stimulated MAPK3 phosphorylation. Plays a critical role regulating PDPK1 membrane translocation in response to insulin stimulation and serves as an adapter protein to recruit PDPK1 to activated insulin receptor, thus promoting PKB/AKT1 phosphorylation and transduction of the insulin signal. This chain is Growth factor receptor-bound protein 14 (Grb14), found in Rattus norvegicus (Rat).